The primary structure comprises 1168 residues: DNA-directed RNA polymerase subunit beta (1168 aa).

This sequence belongs to the RNA polymerase beta chain family. The RNAP catalytic core consists of 2 alpha, 1 beta, 1 beta' and 1 omega subunit. When a sigma factor is associated with the core the holoenzyme is formed, which can initiate transcription.

The catalysed reaction is RNA(n) + a ribonucleoside 5'-triphosphate = RNA(n+1) + diphosphate. DNA-dependent RNA polymerase catalyzes the transcription of DNA into RNA using the four ribonucleoside triphosphates as substrates. The chain is DNA-directed RNA polymerase subunit beta from Rhodococcus opacus (strain B4).